The sequence spans 332 residues: L-lactate dehydrogenase A chain (332 aa).

Ala2 bears the N-acetylalanine mark. Lys5 is modified (N6-acetyllysine; alternate). Residue Lys5 is modified to N6-succinyllysine; alternate. Residue Lys14 is modified to N6-acetyllysine. Thr18 bears the Phosphothreonine mark. Position 29-57 (Gly29–Lys57) interacts with NAD(+). The residue at position 57 (Lys57) is an N6-acetyllysine; alternate. A Glycyl lysine isopeptide (Lys-Gly) (interchain with G-Cter in SUMO2); alternate cross-link involves residue Lys57. At Lys81 the chain carries N6-acetyllysine. NAD(+) is bound at residue Arg99. Arg106 provides a ligand contact to substrate. Lys118 carries the N6-acetyllysine; alternate modification. At Lys118 the chain carries N6-succinyllysine; alternate. Lys126 carries the N6-acetyllysine modification. Asn138 is an NAD(+) binding site. The substrate site is built by Asn138 and Arg169. His193 serves as the catalytic Proton acceptor. 2 positions are modified to N6-acetyllysine: Lys224 and Lys232. A Phosphotyrosine modification is found at Tyr239. Lys243 bears the N6-acetyllysine mark. Thr248 provides a ligand contact to substrate. Position 309 is a phosphothreonine (Thr309). An N6-acetyllysine; alternate modification is found at Lys318. Position 318 is an N6-succinyllysine; alternate (Lys318). Thr322 carries the phosphothreonine modification.

This sequence belongs to the LDH/MDH superfamily. LDH family. In terms of assembly, homotetramer. Interacts with PTEN upstream reading frame protein MP31. Post-translationally, ISGylated.

It is found in the cytoplasm. The catalysed reaction is (S)-lactate + NAD(+) = pyruvate + NADH + H(+). Its pathway is fermentation; pyruvate fermentation to lactate; (S)-lactate from pyruvate: step 1/1. In terms of biological role, interconverts simultaneously and stereospecifically pyruvate and lactate with concomitant interconversion of NADH and NAD(+). This chain is L-lactate dehydrogenase A chain (LDHA), found in Macaca fascicularis (Crab-eating macaque).